Here is a 614-residue protein sequence, read N- to C-terminus: UvrABC system protein C (614 aa).

In terms of domain architecture, GIY-YIG spans S25 to I103. Positions K214–M249 constitute a UVR domain.

This sequence belongs to the UvrC family. Interacts with UvrB in an incision complex.

The protein resides in the cytoplasm. In terms of biological role, the UvrABC repair system catalyzes the recognition and processing of DNA lesions. UvrC both incises the 5' and 3' sides of the lesion. The N-terminal half is responsible for the 3' incision and the C-terminal half is responsible for the 5' incision. The chain is UvrABC system protein C from Anaplasma phagocytophilum (strain HZ).